A 213-amino-acid chain; its full sequence is Peptidyl-prolyl cis-trans isomerase B (213 aa).

The signal sequence occupies residues 1–23 (MAVLRVLCGLLLVSILFLGFVLS). In terms of domain architecture, PPIase cyclophilin-type spans 35–197 (FFDIEVDEQP…KSVKIANCGH (163 aa)). Residues 210 to 213 (DAAE) carry the Prevents secretion from ER motif.

The protein belongs to the cyclophilin-type PPIase family. PPIase B subfamily.

The protein resides in the endoplasmic reticulum lumen. It carries out the reaction [protein]-peptidylproline (omega=180) = [protein]-peptidylproline (omega=0). With respect to regulation, inhibited by cyclosporin A (CsA). Functionally, PPIases accelerate the folding of proteins. It catalyzes the cis-trans isomerization of proline imidic peptide bonds in oligopeptides. This Schistosoma japonicum (Blood fluke) protein is Peptidyl-prolyl cis-trans isomerase B.